Reading from the N-terminus, the 176-residue chain is Ribosome maturation factor RimM (176 aa).

The PRC barrel domain maps to 100–173 (EGEFHLLDLV…WLRLTPPPGL (74 aa)).

It belongs to the RimM family. In terms of assembly, binds ribosomal protein uS19.

Its subcellular location is the cytoplasm. Functionally, an accessory protein needed during the final step in the assembly of 30S ribosomal subunit, possibly for assembly of the head region. Essential for efficient processing of 16S rRNA. May be needed both before and after RbfA during the maturation of 16S rRNA. It has affinity for free ribosomal 30S subunits but not for 70S ribosomes. This Prochlorococcus marinus (strain MIT 9313) protein is Ribosome maturation factor RimM.